The primary structure comprises 405 residues: Putative arsenical pump-driving ATPase (405 aa).

Residue 8 to 15 (GKGGVGKT) participates in ATP binding.

The protein belongs to the arsA ATPase family.

It catalyses the reaction arsenite(in) + ATP + H2O = arsenite(out) + ADP + phosphate + H(+). Its function is as follows. Anion-transporting ATPase. Catalyzes the extrusion of arsenite. In Prosthecochloris vibrioformis (Chlorobium vibrioforme), this protein is Putative arsenical pump-driving ATPase.